The primary structure comprises 434 residues: Ribosomal RNA-processing protein 14 (434 aa).

Ser-2 carries the N-acetylserine modification. 3 stretches are compositionally biased toward basic and acidic residues: residues 32–58 (KSQEQWKAKKKTKEQSKNDKLKKLDPE), 70–79 (VMKKKEKDAK), and 95–105 (KQKEATSKVEG). The interval 32–257 (KSQEQWKAKK…RFKKGKKDSE (226 aa)) is disordered. Residues 121–140 (PDEDEEEEEDIKVIFDDEGN) show a composition bias toward acidic residues. Residues 144-178 (LESKKDTTEPDRSVEKKSITEEEKLQRKKNLEALR) show a composition bias toward basic and acidic residues. 2 coiled-coil regions span residues 162–230 (ITEE…EIAS) and 293–360 (AKND…QKRK). Residues 220–241 (EQEQDQDEIASDSDMEDIDSDL) are compositionally biased toward acidic residues. The segment covering 375–392 (TISERQKRREENLRIRKD) has biased composition (basic and acidic residues). Positions 375 to 434 (TISERQKRREENLRIRKDNKGKKRNKQEKMKRKYVGSAVPKKRAGFEGRLKTGKKKGGPK) are disordered. Basic residues-rich tracts occupy residues 393–408 (NKGKKRNKQEKMKRKY) and 425–434 (KTGKKKGGPK).

This sequence belongs to the SURF6 family. Component of the 90S and 60S pre-ribosomal particles.

It is found in the nucleus. The protein resides in the nucleolus. In terms of biological role, involved in ribosome biogenesis and cell polarity. Required for the synthesis of both 40S and 60S ribosomal subunits and may also play some direct role in correct positioning of the mitotic spindle during mitosis. The protein is Ribosomal RNA-processing protein 14 (RRP14) of Saccharomyces cerevisiae (strain ATCC 204508 / S288c) (Baker's yeast).